We begin with the raw amino-acid sequence, 458 residues long: ATP synthase subunit beta (458 aa).

148 to 155 (GGAGVGKT) provides a ligand contact to ATP.

This sequence belongs to the ATPase alpha/beta chains family. F-type ATPases have 2 components, CF(1) - the catalytic core - and CF(0) - the membrane proton channel. CF(1) has five subunits: alpha(3), beta(3), gamma(1), delta(1), epsilon(1). CF(0) has three main subunits: a(1), b(2) and c(9-12). The alpha and beta chains form an alternating ring which encloses part of the gamma chain. CF(1) is attached to CF(0) by a central stalk formed by the gamma and epsilon chains, while a peripheral stalk is formed by the delta and b chains.

The protein resides in the cell inner membrane. The catalysed reaction is ATP + H2O + 4 H(+)(in) = ADP + phosphate + 5 H(+)(out). Its function is as follows. Produces ATP from ADP in the presence of a proton gradient across the membrane. The catalytic sites are hosted primarily by the beta subunits. The polypeptide is ATP synthase subunit beta (Shewanella loihica (strain ATCC BAA-1088 / PV-4)).